Consider the following 364-residue polypeptide: tRNA-specific 2-thiouridylase MnmA 1 (364 aa).

Residues 10–17 (GMSGGVDS) and Met-36 contribute to the ATP site. Cys-106 acts as the Nucleophile in catalysis. Cys-106 and Cys-204 form a disulfide bridge. Gly-130 lines the ATP pocket. Residues 154–156 (KDQ) form an interaction with tRNA region. The active-site Cysteine persulfide intermediate is the Cys-204. The tract at residues 310–311 (RY) is interaction with tRNA.

The protein belongs to the MnmA/TRMU family.

It localises to the cytoplasm. The enzyme catalyses S-sulfanyl-L-cysteinyl-[protein] + uridine(34) in tRNA + AH2 + ATP = 2-thiouridine(34) in tRNA + L-cysteinyl-[protein] + A + AMP + diphosphate + H(+). Functionally, catalyzes the 2-thiolation of uridine at the wobble position (U34) of tRNA, leading to the formation of s(2)U34. The polypeptide is tRNA-specific 2-thiouridylase MnmA 1 (Caldanaerobacter subterraneus subsp. tengcongensis (strain DSM 15242 / JCM 11007 / NBRC 100824 / MB4) (Thermoanaerobacter tengcongensis)).